Reading from the N-terminus, the 528-residue chain is Na(+)/H(+) antiporter NhaB (528 aa).

The next 11 membrane-spanning stretches (helical) occupy residues 23 to 43, 45 to 65, 90 to 110, 136 to 156, 204 to 224, 237 to 257, 305 to 325, 350 to 370, 392 to 412, 450 to 470, and 479 to 499; these read VAII…NPFV, GWLL…CYPL, LVAN…IYFM, CFAA…AVVI, LLMH…VGEP, FGEF…CGLI, GIIA…VGLI, EEAL…AVII, LALF…VFVG, ATPN…APLI, and VMAL…IMFF.

Belongs to the NhaB Na(+)/H(+) (TC 2.A.34) antiporter family.

The protein resides in the cell inner membrane. The catalysed reaction is 2 Na(+)(in) + 3 H(+)(out) = 2 Na(+)(out) + 3 H(+)(in). Functionally, na(+)/H(+) antiporter that extrudes sodium in exchange for external protons. Can also transport lithium and potassium. The chain is Na(+)/H(+) antiporter NhaB from Vibrio parahaemolyticus serotype O3:K6 (strain RIMD 2210633).